The following is a 400-amino-acid chain: MAVLSAADASPVSAIGFEGYEKRLEITFSEAPVFVDPHGRGLRALSRAQIDSVLDLARCTIVSELSNKDFDSYVLSESSLFIYPLKIVIKTCGTTKLLLTIPRILELAEELSMPLAAVKYSRGTFIFPGAQPAPHRSFSEEVAALNRYFGGLKSGGNAYVIGDPARPGQKWHVFYATEYPEQPMVNLEMCMTGLDKKKACVFFKTNADGNTTCAKEMTKLSGISEIIPEMEICDFDFEPCGYSMNAIHGSAFSTIHVTPEDGFSYASYEVMGLDATALSYGDLVKRVLRCFGPSEFSVAVTIFGGRGHAGTWGKALGAEVYDCNNMVEQELPGGGLLVYQSFCAAEDAVATSPKSVFHCFDGENVESAPPPMKKDYKLANLLCWEEEADAMEEKAGVLDE.

Catalysis depends on residues glutamate 18 and glutamate 21. Residue serine 78 is the Schiff-base intermediate with substrate; via pyruvic acid of the active site. Serine 78 bears the Pyruvic acid (Ser); by autocatalysis mark. Residue cysteine 92 is the Proton donor; for catalytic activity of the active site. Residues serine 243 and histidine 256 each act as proton acceptor; for processing activity in the active site.

This sequence belongs to the eukaryotic AdoMetDC family. Pyruvate serves as cofactor. Is synthesized initially as an inactive proenzyme. Formation of the active enzyme involves a self-maturation process in which the active site pyruvoyl group is generated from an internal serine residue via an autocatalytic post-translational modification. Two non-identical subunits are generated from the proenzyme in this reaction, and the pyruvate is formed at the N-terminus of the alpha chain, which is derived from the carboxyl end of the proenzyme. The post-translation cleavage follows an unusual pathway, termed non-hydrolytic serinolysis, in which the side chain hydroxyl group of the serine supplies its oxygen atom to form the C-terminus of the beta chain, while the remainder of the serine residue undergoes an oxidative deamination to produce ammonia and the pyruvoyl group blocking the N-terminus of the alpha chain.

It catalyses the reaction S-adenosyl-L-methionine + H(+) = S-adenosyl 3-(methylsulfanyl)propylamine + CO2. It functions in the pathway amine and polyamine biosynthesis; S-adenosylmethioninamine biosynthesis; S-adenosylmethioninamine from S-adenosyl-L-methionine: step 1/1. The sequence is that of S-adenosylmethionine decarboxylase proenzyme (SAMDC) from Zea mays (Maize).